The sequence spans 425 residues: Inhibin beta A chain (425 aa).

An N-terminal signal peptide occupies residues 1 to 20; it reads MPLLWLRGFLLASCWIIVRS. The propeptide occupies 21-309; it reads SPTPGSEGHS…EDHPHRRRRR (289 aa). N-linked (GlcNAc...) asparagine glycosylation is present at N165. The segment at 259–289 is disordered; that stretch reads KKKKKEEEGEGKKRDGEGGAGGDEEKEQSHR. Basic and acidic residues predominate over residues 263 to 275; that stretch reads KEEEGEGKKRDGE. Disulfide bonds link C313-C321, C320-C390, C349-C422, and C353-C424.

It belongs to the TGF-beta family. Dimeric, linked by one or more disulfide bonds. Inhibin A is a dimer of alpha/INHA and beta-A/INHBA. Activin A is a homodimer of beta-A/INHBA. Activin AB is a dimer of beta-A/INHBA and beta-B/INHBB. Interacts with FST and FSTL3; these interactions prevent activin A interaction to its type II receptor. Activin A interacts with ACVR2A. Activin A interacts with BMPR2. Inhibin A interacts with ACVR1; this interaction creates a non-signaling complex (NSC) that inhibits ACVR1-mediated BMP signaling. Inhibin A interacts with ACVR2A.

Its subcellular location is the secreted. Its function is as follows. Inhibins/activins are involved in regulating a number of diverse functions such as hypothalamic and pituitary hormone secretion, gonadal hormone secretion, germ cell development and maturation, erythroid differentiation, insulin secretion, nerve cell survival, embryonic axial development or bone growth, depending on their subunit composition. In terms of biological role, activin A is a homodimer of INHBA that plays a role in several essential biological processes including embryonic development, stem cell maintenance and differentiation, haematopoiesis, cell proliferation and tissue fibrosis. Signals through type I (such as ACVR1B or ACVR1C) and type II receptors (such as ACVR2A, ACVR2B or BMPR2) which, upon ligand binding, phosphorylate SMAD2 and SMAD3 intracellular signaling mediators that form a complex with SMAD4, translocate to the nucleus and modulate gene expression. Can also activate alternative non-canonical intracellular signaling pathways including the p38 MAPK, extracellular signal-regulated kinases 1/2 (ERK1/2) and c-Jun N-terminal kinases (JNKs) to modulate cell migration and differentiation. Alternatively, promotes osteoblastic differentiation via ACVRL1-SMAD1/5/9 pathway. In addition, can engage the type I receptor ACVR1 to form an ACVR1-activin A-type II receptor non-signaling complex (NSC) that renders receptors unavailable for engagement with BMPs, hence resulting in an apparent inhibition of ACVR1-mediated BMP signaling. Inhibin A is a dimer of alpha/INHA and beta-A/INHBA that functions as a feedback regulator in the hypothalamic-pituitary-gonadal (HPG) axis. Inhibits the secretion of FSH from the anterior pituitary gland by acting on pituitary gonadotrope cells. Antagonizes activin A by binding to the proteoglycan, betaglycan, and forming a stable complex with and, thereby, sequestering type II activin receptors while excluding type I receptor. This Bos taurus (Bovine) protein is Inhibin beta A chain (INHBA).